Here is a 132-residue protein sequence, read N- to C-terminus: U-scoloptoxin(05)-Er3a (132 aa).

The N-terminal stretch at 1-19 (MRSWFVFVALLAVVFLPSS) is a signal peptide.

It belongs to the scoloptoxin-05 family. Contains 5 disulfide bonds. Expressed by the venom gland.

The protein resides in the secreted. This chain is U-scoloptoxin(05)-Er3a, found in Ethmostigmus rubripes (Giant centipede).